Here is a 540-residue protein sequence, read N- to C-terminus: Chaperonin GroEL (540 aa).

ATP is bound by residues 29–32, 86–90, glycine 413, 477–479, and aspartate 493; these read TIGP, DGTTT, and NAA.

The protein belongs to the chaperonin (HSP60) family. In terms of assembly, forms a cylinder of 14 subunits composed of two heptameric rings stacked back-to-back. Interacts with the co-chaperonin GroES.

It localises to the cytoplasm. The enzyme catalyses ATP + H2O + a folded polypeptide = ADP + phosphate + an unfolded polypeptide.. Its function is as follows. Together with its co-chaperonin GroES, plays an essential role in assisting protein folding. The GroEL-GroES system forms a nano-cage that allows encapsulation of the non-native substrate proteins and provides a physical environment optimized to promote and accelerate protein folding. This is Chaperonin GroEL from Lactobacillus helveticus (strain DPC 4571).